A 441-amino-acid chain; its full sequence is Transcriptional regulatory protein ZraR (441 aa).

The region spanning 7-121 (DILVVDDDIS…NLQATLEKAL (115 aa)) is the Response regulatory domain. Asp56 carries the post-translational modification 4-aspartylphosphate. One can recognise a Sigma-54 factor interaction domain in the interval 141–370 (MVGKSPAMQH…LENAVERAVV (230 aa)). Gly172, Thr173, Arg329, and Arg359 together coordinate ATP. The H-T-H motif DNA-binding region spans 421-440 (KTEAARQLGITRKTLLAKLS).

Post-translationally, phosphorylated by ZraS.

The protein localises to the cytoplasm. Activity of the ZraS/ZraR two-component system is repressed by the zinc-bound form of ZraP, which probably interacts with the periplasmic region of ZraS. Its function is as follows. Part of the Zra signaling pathway, an envelope stress response (ESR) system composed of the periplasmic accessory protein ZraP, the histidine kinase ZraS and the transcriptional regulator ZraR. The ZraPSR system contributes to antibiotic resistance and is important for membrane integrity in the presence of membrane-targeting biocides. ZraR is a member of the two-component regulatory system ZraS/ZraR. When activated by ZraS, acts in conjunction with sigma-54 to regulate the expression of zraP in the presence of high Zn(2+) or Pb(2+) concentrations. Also positively autoregulates the expression of the zraSR operon. In Escherichia coli O157:H7, this protein is Transcriptional regulatory protein ZraR (zraR).